The following is a 483-amino-acid chain: MKFIVKPHPEIFVKSESVRKRFTKILESNIRIIVKARTQGVAVFNRRDHIEVTSNSDTYYAEVLEILTTTPGIQQVLEVQQSSFTDLHNIYEQVLELNRANLENKTFVVRAKRRGKHDFTSIELERYVGGGLNQAIASAKVKLINPDVTVQVEVVDELLNQVIARHKGLGGFPLGTQEDVLSLISGGFDSGVSSYLHIKRGSKVHYCFFNLGGPAHEIGVKQTAYYLWQKYGSSAKVRFIAIDFAPVVAEILEKIDDGQMGVVLKRMFMRTAGMVAEKFGIQALVTGEALGQVSSQTLTNLRHIDNVTDTLILRPLINWDKEDIIRLAREIGTEDFAKTMPEFCGVISKSPTVKAVKEKLEEEEAKFDFALLDQVVYNARQIDIRDIGKESLEKAPEVELVNSAEEGNAVVLDIRSPDEEDESPLEIVGVEVKHLPFYKLATQFGDLDQSKTYLLYCSRGVMSRLQALYLQEQGFNNVKVYRP.

Residues 61–165 (AEVLEILTTT…DELLNQVIAR (105 aa)) enclose the THUMP domain. ATP contacts are provided by residues 183–184 (LI), lysine 265, glycine 287, and glutamine 296. A disulfide bridge links cysteine 344 with cysteine 457. The Rhodanese domain occupies 405–483 (EEGNAVVLDI…GFNNVKVYRP (79 aa)). Cysteine 457 acts as the Cysteine persulfide intermediate in catalysis.

This sequence belongs to the ThiI family.

It localises to the cytoplasm. It catalyses the reaction [ThiI sulfur-carrier protein]-S-sulfanyl-L-cysteine + a uridine in tRNA + 2 reduced [2Fe-2S]-[ferredoxin] + ATP + H(+) = [ThiI sulfur-carrier protein]-L-cysteine + a 4-thiouridine in tRNA + 2 oxidized [2Fe-2S]-[ferredoxin] + AMP + diphosphate. The catalysed reaction is [ThiS sulfur-carrier protein]-C-terminal Gly-Gly-AMP + S-sulfanyl-L-cysteinyl-[cysteine desulfurase] + AH2 = [ThiS sulfur-carrier protein]-C-terminal-Gly-aminoethanethioate + L-cysteinyl-[cysteine desulfurase] + A + AMP + 2 H(+). Its pathway is cofactor biosynthesis; thiamine diphosphate biosynthesis. Catalyzes the ATP-dependent transfer of a sulfur to tRNA to produce 4-thiouridine in position 8 of tRNAs, which functions as a near-UV photosensor. Also catalyzes the transfer of sulfur to the sulfur carrier protein ThiS, forming ThiS-thiocarboxylate. This is a step in the synthesis of thiazole, in the thiamine biosynthesis pathway. The sulfur is donated as persulfide by IscS. This is tRNA sulfurtransferase from Vibrio cholerae serotype O1 (strain ATCC 39315 / El Tor Inaba N16961).